Reading from the N-terminus, the 306-residue chain is Acetyl-coenzyme A carboxylase carboxyl transferase subunit beta (306 aa).

The CoA carboxyltransferase N-terminal domain occupies 25 to 294 (LWIKDPTSGE…AVNPSNPSPT (270 aa)). The tract at residues 286–306 (VNPSNPSPTDSQPPLSKAEAA) is disordered. The segment covering 287-299 (NPSNPSPTDSQPP) has biased composition (polar residues).

Belongs to the AccD/PCCB family. In terms of assembly, acetyl-CoA carboxylase is a heterohexamer composed of biotin carboxyl carrier protein (AccB), biotin carboxylase (AccC) and two subunits each of ACCase subunit alpha (AccA) and ACCase subunit beta (AccD).

Its subcellular location is the cytoplasm. The catalysed reaction is N(6)-carboxybiotinyl-L-lysyl-[protein] + acetyl-CoA = N(6)-biotinyl-L-lysyl-[protein] + malonyl-CoA. It participates in lipid metabolism; malonyl-CoA biosynthesis; malonyl-CoA from acetyl-CoA: step 1/1. Component of the acetyl coenzyme A carboxylase (ACC) complex. Biotin carboxylase (BC) catalyzes the carboxylation of biotin on its carrier protein (BCCP) and then the CO(2) group is transferred by the transcarboxylase to acetyl-CoA to form malonyl-CoA. The protein is Acetyl-coenzyme A carboxylase carboxyl transferase subunit beta of Bartonella quintana (strain Toulouse) (Rochalimaea quintana).